Here is a 603-residue protein sequence, read N- to C-terminus: Penicillin-binding protein activator LpoA (603 aa).

The N-terminal stretch at 1–26 (MAMNHHQRRSVPRLLTPIALSIVLSA) is a signal peptide. A lipid anchor (N-palmitoyl cysteine) is attached at C27. C27 is lipidated: S-diacylglycerol cysteine.

The protein belongs to the LpoA family. As to quaternary structure, interacts with PBP1a.

The protein resides in the cell outer membrane. In terms of biological role, regulator of peptidoglycan synthesis that is essential for the function of penicillin-binding protein 1A (PBP1a). The sequence is that of Penicillin-binding protein activator LpoA from Vibrio cholerae serotype O1 (strain ATCC 39541 / Classical Ogawa 395 / O395).